The sequence spans 134 residues: Cytochrome c-type biogenesis protein CcmE (134 aa).

Residues 1-7 are Cytoplasmic-facing; that stretch reads MKRKYRR. Residues 8–28 form a helical; Signal-anchor for type II membrane protein membrane-spanning segment; the sequence is LFVVIITLSIFAGSVVFVLGK. Over 29–134 the chain is Periplasmic; sequence LKNNVSFFYT…MPNKYKTNNL (106 aa). H120 and Y124 together coordinate heme.

Belongs to the CcmE/CycJ family.

It localises to the cell inner membrane. Functionally, heme chaperone required for the biogenesis of c-type cytochromes. Transiently binds heme delivered by CcmC and transfers the heme to apo-cytochromes in a process facilitated by CcmF and CcmH. The protein is Cytochrome c-type biogenesis protein CcmE of Ehrlichia ruminantium (strain Gardel).